The sequence spans 66 residues: ATP synthase subunit c (66 aa).

A run of 2 helical transmembrane segments spans residues 3-23 and 45-65; these read LTFL…GLLM and FLGV…SFII.

It belongs to the ATPase C chain family. In terms of assembly, F-type ATPases have 2 components, F(1) - the catalytic core - and F(0) - the membrane proton channel. F(1) has five subunits: alpha(3), beta(3), gamma(1), delta(1), epsilon(1). F(0) has three main subunits: a(1), b(2) and c(10-14). The alpha and beta chains form an alternating ring which encloses part of the gamma chain. F(1) is attached to F(0) by a central stalk formed by the gamma and epsilon chains, while a peripheral stalk is formed by the delta and b chains.

Its subcellular location is the cell membrane. Its function is as follows. F(1)F(0) ATP synthase produces ATP from ADP in the presence of a proton or sodium gradient. F-type ATPases consist of two structural domains, F(1) containing the extramembraneous catalytic core and F(0) containing the membrane proton channel, linked together by a central stalk and a peripheral stalk. During catalysis, ATP synthesis in the catalytic domain of F(1) is coupled via a rotary mechanism of the central stalk subunits to proton translocation. In terms of biological role, key component of the F(0) channel; it plays a direct role in translocation across the membrane. A homomeric c-ring of between 10-14 subunits forms the central stalk rotor element with the F(1) delta and epsilon subunits. This chain is ATP synthase subunit c, found in Streptococcus pneumoniae serotype 19F (strain G54).